Here is a 1104-residue protein sequence, read N- to C-terminus: Extended synaptotagmin-1 (1104 aa).

Position 1 is an N-acetylmethionine (methionine 1). Topologically, residues 1-38 are cytoplasmic; sequence MERSPGEGPSPSPMDQPSAPSDPTDQPPAAHAKPDPGS. The segment at 1-48 is disordered; it reads MERSPGEGPSPSPMDQPSAPSDPTDQPPAAHAKPDPGSGGQPAGPGAA. The segment covering 37–47 has biased composition (gly residues); it reads GSGGQPAGPGA. The chain crosses the membrane as a helical span at residues 39-59; it reads GGQPAGPGAAGEALAVLTSFG. Topologically, residues 60 to 62 are lumenal; that stretch reads RRL. Residues 63–83 form a helical membrane-spanning segment; that stretch reads LVLIPVYLAGAVGLSVGFVLF. Residues 84–1104 are Cytoplasmic-facing; it reads GLALYLGWRR…LMDNKDKGSS (1021 aa). Residues 91–116 adopt a coiled-coil conformation; sequence WRRVRDEKERSLRAARQLLDDEEQLT. Positions 135-313 constitute an SMP-LTD domain; sequence DVEKAEWLNK…LPNRLLVPLV (179 aa). 4 C2 domains span residues 312–433, 460–580, 627–751, and 777–899; these read LVPD…DDWF, QVLQ…QLSS, SVDA…DEWL, and LEEV…TLSS. Serine 324 carries the post-translational modification Phosphoserine; by CDK5. 8 residues coordinate Ca(2+): lysine 344, aspartate 345, aspartate 357, aspartate 404, aspartate 406, aspartate 408, aspartate 410, and aspartate 411. Positions 617 to 641 are disordered; sequence VDSENPQRGSSVDAPPRPCHTTPDS. Lysine 817 carries the post-translational modification N6-acetyllysine. Phosphoserine is present on residues serine 820 and serine 941. The segment at 924–950 is disordered; sequence SHSYSHSSSSLSEEPELSGGPPHITSS. Positions 925–946 are enriched in low complexity; that stretch reads HSYSHSSSSLSEEPELSGGPPH. Threonine 948 carries the post-translational modification Phosphothreonine. Serine 949 and serine 963 each carry phosphoserine. Residues 971–1093 enclose the C2 5 domain; sequence PLGQVKLTLW…DLSQGVARWY (123 aa). Tyrosine 1009 is modified (phosphotyrosine). The tract at residues 1018-1025 is required for phosphatidylinositol 4,5-bisphosphate-dependent location at the cell membrane; the sequence is KNRGTKRR. Serine 1034 is modified (phosphoserine).

It belongs to the extended synaptotagmin family. In terms of assembly, interacts with ESYT2 and ESYT3. Interacts with ADGRD1; inhibiting the G-protein-coupled receptor activity of ADGRD1. Interaction with ADGRD1 is abolished when cytosolic calcium increases, relieving ADGRD1 G-protein-coupled receptor activity. Interacts (phosphorylated form) with SLC2A4. Post-translationally, phosphorylated on Ser residues in insulin-treated adipocytes (in vitro); this promotes interaction with SLC2A4. Widely expressed.

Its subcellular location is the endoplasmic reticulum membrane. The protein localises to the cell membrane. Functionally, binds calcium (via the C2 domains) and translocates to sites of contact between the endoplasmic reticulum and the cell membrane in response to increased cytosolic calcium levels. Helps tether the endoplasmic reticulum to the cell membrane and promotes the formation of appositions between the endoplasmic reticulum and the cell membrane. Acts as an inhibitor of ADGRD1 G-protein-coupled receptor activity in absence of cytosolic calcium. Binds glycerophospholipids in a barrel-like domain and may play a role in cellular lipid transport. This Homo sapiens (Human) protein is Extended synaptotagmin-1.